A 921-amino-acid chain; its full sequence is Isoleucine--tRNA ligase (921 aa).

The 'HIGH' region signature appears at 57–67 (PYANGDIHMGH). E552 is a binding site for L-isoleucyl-5'-AMP. The 'KMSKS' region motif lies at 593 to 597 (KMSKS). K596 contacts ATP. The Zn(2+) site is built by C888, C891, C908, and C911.

It belongs to the class-I aminoacyl-tRNA synthetase family. IleS type 1 subfamily. In terms of assembly, monomer. The cofactor is Zn(2+).

The protein resides in the cytoplasm. It catalyses the reaction tRNA(Ile) + L-isoleucine + ATP = L-isoleucyl-tRNA(Ile) + AMP + diphosphate. In terms of biological role, catalyzes the attachment of isoleucine to tRNA(Ile). As IleRS can inadvertently accommodate and process structurally similar amino acids such as valine, to avoid such errors it has two additional distinct tRNA(Ile)-dependent editing activities. One activity is designated as 'pretransfer' editing and involves the hydrolysis of activated Val-AMP. The other activity is designated 'posttransfer' editing and involves deacylation of mischarged Val-tRNA(Ile). The polypeptide is Isoleucine--tRNA ligase (Bacillus cereus (strain B4264)).